The sequence spans 424 residues: Cysteate synthase (424 aa).

Residue Lys-106 is modified to N6-(pyridoxal phosphate)lysine. Asn-132 and Thr-381 together coordinate pyridoxal 5'-phosphate.

The protein belongs to the threonine synthase family. Cysteate synthase subfamily. Homotrimer. Pyridoxal 5'-phosphate is required as a cofactor.

It catalyses the reaction O-phospho-L-serine + sulfite + H(+) = L-cysteate + phosphate. The protein operates within cofactor biosynthesis; coenzyme M biosynthesis. Specifically catalyzes the beta-elimination of phosphate from L-phosphoserine and the beta-addition of sulfite to the dehydroalanine intermediate to produce L-cysteate. In Methanoregula boonei (strain DSM 21154 / JCM 14090 / 6A8), this protein is Cysteate synthase.